The following is a 251-amino-acid chain: Methionine aminopeptidase (251 aa).

Histidine 79 contacts substrate. Residues aspartate 96, aspartate 107, and histidine 170 each contribute to the a divalent metal cation site. Histidine 177 is a binding site for substrate. Glutamate 204 and glutamate 235 together coordinate a divalent metal cation.

The protein belongs to the peptidase M24A family. Methionine aminopeptidase type 1 subfamily. Monomer. The cofactor is Co(2+). Zn(2+) serves as cofactor. It depends on Mn(2+) as a cofactor. Fe(2+) is required as a cofactor.

It catalyses the reaction Release of N-terminal amino acids, preferentially methionine, from peptides and arylamides.. Functionally, removes the N-terminal methionine from nascent proteins. The N-terminal methionine is often cleaved when the second residue in the primary sequence is small and uncharged (Met-Ala-, Cys, Gly, Pro, Ser, Thr, or Val). Requires deformylation of the N(alpha)-formylated initiator methionine before it can be hydrolyzed. The polypeptide is Methionine aminopeptidase (Borreliella burgdorferi (strain ATCC 35210 / DSM 4680 / CIP 102532 / B31) (Borrelia burgdorferi)).